The following is a 223-amino-acid chain: All-trans retinoic acid-induced differentiation factor (223 aa).

The N-terminal stretch at 1-25 (MASRESGGSRAAALLLVLGVERALA) is a signal peptide. Over 26-193 (LPEICTLCPG…YKCMRQGSFS (168 aa)) the chain is Extracellular. Positions 146–187 (QRDLCNSTGSPEMCPENGSCASDGPGLLQCVCADGFHGYKCM) constitute an EGF-like domain. 3 disulfide bridges follow: C150-C165, C159-C175, and C177-C186. A helical transmembrane segment spans residues 194–214 (LLMFFGILGSTTLAISILLWG). Topologically, residues 215–223 (TQRRKAKAS) are cytoplasmic.

As to quaternary structure, interacts with NELL1; the interaction promotes osteoblastic differentiation and mineralization. Interacts with SLC37A3; the interaction is direct and both proteins are mutually dependent for their stability.

It localises to the nucleus envelope. The protein localises to the cell membrane. The protein resides in the lysosome membrane. Promotes osteoblast cell differentiation and terminal mineralization. Plays a role in inducing the cell cycle arrest via inhibiting CCND1 expression in all-trans-retinoic acid (ATRA) signal pathway. In osteoclasts, forms a transporter complex with ATRAID for nitrogen-containing-bisphophonates (N-BPs) required for releasing N-BP molecules that have trafficked to lysosomes through fluid-phase endocytosis into the cytosol. This chain is All-trans retinoic acid-induced differentiation factor (Atraid), found in Mus musculus (Mouse).